A 253-amino-acid polypeptide reads, in one-letter code: MRKTFLAGNWKMHYTSTEASIVAKKIATEVKTLKDDFVIMITPPFTALSKVSECIKGSNILLGAQNMSYMESGARTSEISPSMLLEFGVEYVILGHSECRLYLGETDEIINKKILTGLKHPFKYLILCVGETLNERDSEKTLDVVLNQVKKGLDGVSESDIKRIILAYEPIWAIGTGKTATKEEAEEVHKAIRLEIMKLYSKSVSDNVIIQYGGSVNSSNVKELMNEPDIDGALIGGASLKAESFLSIINNVL.

9 to 11 contributes to the substrate binding site; that stretch reads NWK. Catalysis depends on His96, which acts as the Electrophile. The active-site Proton acceptor is the Glu169. Residues Gly175, Ser215, and 236-237 contribute to the substrate site; that span reads GG.

Belongs to the triosephosphate isomerase family. In terms of assembly, homodimer.

The protein localises to the cytoplasm. It carries out the reaction D-glyceraldehyde 3-phosphate = dihydroxyacetone phosphate. It functions in the pathway carbohydrate biosynthesis; gluconeogenesis. Its pathway is carbohydrate degradation; glycolysis; D-glyceraldehyde 3-phosphate from glycerone phosphate: step 1/1. Involved in the gluconeogenesis. Catalyzes stereospecifically the conversion of dihydroxyacetone phosphate (DHAP) to D-glyceraldehyde-3-phosphate (G3P). The chain is Triosephosphate isomerase from Borrelia garinii subsp. bavariensis (strain ATCC BAA-2496 / DSM 23469 / PBi) (Borreliella bavariensis).